The primary structure comprises 234 residues: Ribosome maturation protein SDO1 homolog (234 aa).

The protein belongs to the SDO1/SBDS family.

The polypeptide is Ribosome maturation protein SDO1 homolog (Archaeoglobus fulgidus (strain ATCC 49558 / DSM 4304 / JCM 9628 / NBRC 100126 / VC-16)).